Here is a 635-residue protein sequence, read N- to C-terminus: Glycosyltransferase-like protein gnt13 (635 aa).

Topologically, residues M1–N18 are cytoplasmic. A helical; Signal-anchor for type II membrane protein membrane pass occupies residues F19–L38. Residues M39–W635 are Extracellular-facing. Residues N41 and N179 are each glycosylated (N-linked (GlcNAc...) asparagine). Disordered stretches follow at residues N300 to D358 and N389 to P458. A compositionally biased stretch (low complexity) spans N389–N456. N393 and N535 each carry an N-linked (GlcNAc...) asparagine glycan.

The protein belongs to the glycosyltransferase 8 family. Highly divergent.

It is found in the membrane. The polypeptide is Glycosyltransferase-like protein gnt13 (gnt13) (Dictyostelium discoideum (Social amoeba)).